The primary structure comprises 201 residues: 3-isopropylmalate dehydratase small subunit (201 aa).

Belongs to the LeuD family. LeuD type 1 subfamily. Heterodimer of LeuC and LeuD.

It catalyses the reaction (2R,3S)-3-isopropylmalate = (2S)-2-isopropylmalate. It functions in the pathway amino-acid biosynthesis; L-leucine biosynthesis; L-leucine from 3-methyl-2-oxobutanoate: step 2/4. Catalyzes the isomerization between 2-isopropylmalate and 3-isopropylmalate, via the formation of 2-isopropylmaleate. In Thermus thermophilus (strain ATCC BAA-163 / DSM 7039 / HB27), this protein is 3-isopropylmalate dehydratase small subunit.